Here is a 145-residue protein sequence, read N- to C-terminus: 3-dehydroquinate dehydratase (145 aa).

Tyr24 acts as the Proton acceptor in catalysis. Substrate-binding residues include Asn76, His82, and Asp89. The active-site Proton donor is the His102. Substrate contacts are provided by residues 103–104 and Arg113; that span reads VS.

It belongs to the type-II 3-dehydroquinase family. In terms of assembly, homododecamer.

It carries out the reaction 3-dehydroquinate = 3-dehydroshikimate + H2O. Its pathway is metabolic intermediate biosynthesis; chorismate biosynthesis; chorismate from D-erythrose 4-phosphate and phosphoenolpyruvate: step 3/7. Catalyzes a trans-dehydration via an enolate intermediate. In Herminiimonas arsenicoxydans, this protein is 3-dehydroquinate dehydratase.